The sequence spans 1463 residues: Nitric oxide synthase 1 (1463 aa).

The segment at 1-200 is interaction with NOSIP; the sequence is MESHMFSVQQ…LQGSGENNKL (200 aa). The 83-residue stretch at 17–99 folds into the PDZ domain; sequence SVRLFKRKVG…ETHVVLILRG (83 aa). Disordered regions lie at residues 110-194, 215-250, and 268-298; these read TFTG…LQGS, GKAI…LPLG, and VVLN…SKCP. A DYNLL1/PIN/nNOS-inhibiting protein-binding region spans residues 158 to 240; sequence PDPGQEASSL…VEVQVDRDPD (83 aa). Positions 226–243 are enriched in basic and acidic residues; that stretch reads TETKDVEVQVDRDPDSKS. Polar residues predominate over residues 280 to 294; the sequence is PSASGKQSPTKNGSP. Serine 334 contributes to the (6R)-L-erythro-5,6,7,8-tetrahydrobiopterin binding site. Cysteine 415 serves as a coordination point for heme b. Positions 478, 587, 588, and 592 each coordinate L-arginine. Residues valine 677, tryptophan 678, and phenylalanine 691 each contribute to the (6R)-L-erythro-5,6,7,8-tetrahydrobiopterin site. Tyrosine 706 contacts heme b. The calmodulin-binding stretch occupies residues 725-745; sequence KRRAIGFKKLAEAVKFSAKLM. One can recognise a Flavodoxin-like domain in the interval 755–969; sequence ATILYATETG…AFRTWAKKVF (215 aa). Residues threonine 761, glutamate 762, threonine 763, lysine 765, serine 766, serine 807, threonine 808, and glycine 812 each contribute to the FMN site. Phosphoserine is present on residues serine 881, serine 891, and serine 892. Residues serine 920, histidine 925, cysteine 927, glutamate 953, and glutamine 957 each coordinate FMN. The 248-residue stretch at 1024-1271 folds into the FAD-binding FR-type domain; sequence KRVSAARLLS…VRGAPSFHLP (248 aa). Position 1044 (arginine 1044) interacts with NADP(+). FAD contacts are provided by histidine 1066, arginine 1207, tyrosine 1208, tyrosine 1209, serine 1210, threonine 1225, and alanine 1227. Residue serine 1230 participates in NADP(+) binding. Residues tyrosine 1231, valine 1244, cysteine 1245, and serine 1246 each contribute to the FAD site. Residues threonine 1285, arginine 1318, serine 1347, arginine 1348, lysine 1354, tyrosine 1356, glutamine 1358, aspartate 1391, threonine 1432, and arginine 1434 each coordinate NADP(+).

Belongs to the NOS family. As to quaternary structure, homodimer. Interacts with DLG4; the interaction possibly being prevented by the association between NOS1 and CAPON. Forms a ternary complex with CAPON and RASD1. Forms a ternary complex with CAPON and SYN1. Interacts with ZDHHC23. Interacts with NOSIP; which may impair its synaptic location. Interacts with HTR4. Interacts with SLC6A4. Interacts with VAC14. Interacts (via N-terminal domain) with DLG4 (via N-terminal tandem pair of PDZ domains). Interacts with SLC6A4. Forms a complex with ASL, ASS1 and SLC7A1; the complex regulates cell-autonomous L-arginine synthesis and citrulline recycling while channeling extracellular L-arginine to nitric oxide synthesis pathway. Interacts with DMD; localizes NOS1 to sarcolemma in muscle cells. Interacts with DYNLL1; inhibits the nitric oxide synthase activity. Heme b is required as a cofactor. The cofactor is FAD. Requires FMN as cofactor. It depends on (6R)-L-erythro-5,6,7,8-tetrahydrobiopterin as a cofactor. In terms of processing, ubiquitinated; mediated by STUB1/CHIP in the presence of Hsp70 and Hsp40 (in vitro).

It is found in the cell membrane. Its subcellular location is the sarcolemma. The protein resides in the cell projection. The protein localises to the dendritic spine. It catalyses the reaction 2 L-arginine + 3 NADPH + 4 O2 + H(+) = 2 L-citrulline + 2 nitric oxide + 3 NADP(+) + 4 H2O. With respect to regulation, stimulated by calcium/calmodulin. Inhibited by DYNLL1 that prevents the dimerization of the protein. Inhibited by NOSIP. Its function is as follows. Produces nitric oxide (NO) which is a messenger molecule with diverse functions throughout the body. In the brain and peripheral nervous system, NO displays many properties of a neurotransmitter. Probably has nitrosylase activity and mediates cysteine S-nitrosylation of cytoplasmic target proteins such SRR. In Ovis aries (Sheep), this protein is Nitric oxide synthase 1 (NOS1).